The following is a 153-amino-acid chain: Endoribonuclease YbeY (153 aa).

Zn(2+) contacts are provided by histidine 118, histidine 122, and histidine 128.

Belongs to the endoribonuclease YbeY family. It depends on Zn(2+) as a cofactor.

The protein localises to the cytoplasm. Single strand-specific metallo-endoribonuclease involved in late-stage 70S ribosome quality control and in maturation of the 3' terminus of the 16S rRNA. In Staphylococcus carnosus (strain TM300), this protein is Endoribonuclease YbeY.